The following is a 255-amino-acid chain: Triosephosphate isomerase (255 aa).

Substrate is bound at residue 9-11 (NWK). His-95 acts as the Electrophile in catalysis. Glu-167 (proton acceptor) is an active-site residue. Residues Gly-173, Ser-212, and 233–234 (GG) each bind substrate.

This sequence belongs to the triosephosphate isomerase family. Homodimer.

The protein localises to the cytoplasm. It catalyses the reaction D-glyceraldehyde 3-phosphate = dihydroxyacetone phosphate. Its pathway is carbohydrate biosynthesis; gluconeogenesis. The protein operates within carbohydrate degradation; glycolysis; D-glyceraldehyde 3-phosphate from glycerone phosphate: step 1/1. Its function is as follows. Involved in the gluconeogenesis. Catalyzes stereospecifically the conversion of dihydroxyacetone phosphate (DHAP) to D-glyceraldehyde-3-phosphate (G3P). The protein is Triosephosphate isomerase of Klebsiella pneumoniae.